The sequence spans 246 residues: Pyridoxine 5'-phosphate synthase (246 aa).

Asn12 contributes to the 3-amino-2-oxopropyl phosphate binding site. 14-15 (DH) is a 1-deoxy-D-xylulose 5-phosphate binding site. Residue Arg23 participates in 3-amino-2-oxopropyl phosphate binding. The Proton acceptor role is filled by His48. 1-deoxy-D-xylulose 5-phosphate contacts are provided by Arg50 and His55. The Proton acceptor role is filled by Glu75. Thr105 lines the 1-deoxy-D-xylulose 5-phosphate pocket. The active-site Proton donor is His196. 3-amino-2-oxopropyl phosphate is bound by residues Gly197 and 218-219 (GH).

It belongs to the PNP synthase family. As to quaternary structure, homooctamer; tetramer of dimers.

Its subcellular location is the cytoplasm. The catalysed reaction is 3-amino-2-oxopropyl phosphate + 1-deoxy-D-xylulose 5-phosphate = pyridoxine 5'-phosphate + phosphate + 2 H2O + H(+). Its pathway is cofactor biosynthesis; pyridoxine 5'-phosphate biosynthesis; pyridoxine 5'-phosphate from D-erythrose 4-phosphate: step 5/5. Catalyzes the complicated ring closure reaction between the two acyclic compounds 1-deoxy-D-xylulose-5-phosphate (DXP) and 3-amino-2-oxopropyl phosphate (1-amino-acetone-3-phosphate or AAP) to form pyridoxine 5'-phosphate (PNP) and inorganic phosphate. This chain is Pyridoxine 5'-phosphate synthase, found in Pseudomonas putida (strain GB-1).